We begin with the raw amino-acid sequence, 126 residues long: Fluoride-specific ion channel FluC (126 aa).

A run of 4 helical transmembrane segments spans residues I4–W24, Y35–I55, M68–F88, and I100–L120. 2 residues coordinate Na(+): G75 and T78.

The protein belongs to the fluoride channel Fluc/FEX (TC 1.A.43) family.

The protein resides in the cell membrane. It catalyses the reaction fluoride(in) = fluoride(out). Na(+) is not transported, but it plays an essential structural role and its presence is essential for fluoride channel function. In terms of biological role, fluoride-specific ion channel. Important for reducing fluoride concentration in the cell, thus reducing its toxicity. This Chloroflexus aurantiacus (strain ATCC 29366 / DSM 635 / J-10-fl) protein is Fluoride-specific ion channel FluC.